The chain runs to 66 residues: ATP synthase subunit c (66 aa).

The next 2 helical transmembrane spans lie at 3-23 (LTFL…GLLM) and 45-65 (FLGV…SFII).

It belongs to the ATPase C chain family. F-type ATPases have 2 components, F(1) - the catalytic core - and F(0) - the membrane proton channel. F(1) has five subunits: alpha(3), beta(3), gamma(1), delta(1), epsilon(1). F(0) has three main subunits: a(1), b(2) and c(10-14). The alpha and beta chains form an alternating ring which encloses part of the gamma chain. F(1) is attached to F(0) by a central stalk formed by the gamma and epsilon chains, while a peripheral stalk is formed by the delta and b chains.

It is found in the cell membrane. Its function is as follows. F(1)F(0) ATP synthase produces ATP from ADP in the presence of a proton or sodium gradient. F-type ATPases consist of two structural domains, F(1) containing the extramembraneous catalytic core and F(0) containing the membrane proton channel, linked together by a central stalk and a peripheral stalk. During catalysis, ATP synthesis in the catalytic domain of F(1) is coupled via a rotary mechanism of the central stalk subunits to proton translocation. Functionally, key component of the F(0) channel; it plays a direct role in translocation across the membrane. A homomeric c-ring of between 10-14 subunits forms the central stalk rotor element with the F(1) delta and epsilon subunits. This chain is ATP synthase subunit c, found in Streptococcus pneumoniae serotype 19F (strain G54).